The chain runs to 357 residues: Protein FAM118A (357 aa).

M1 carries the post-translational modification N-acetylmethionine. Residues 30–50 (LLLVIGTGVSAAVAPGIPALC) traverse the membrane as a helical segment. A Phosphoserine modification is found at S311.

This sequence belongs to the FAM118 family.

The protein resides in the membrane. This Homo sapiens (Human) protein is Protein FAM118A (FAM118A).